A 371-amino-acid chain; its full sequence is Peptide chain release factor 2 (371 aa).

An N5-methylglutamine modification is found at Gln-253.

This sequence belongs to the prokaryotic/mitochondrial release factor family. Methylated by PrmC. Methylation increases the termination efficiency of RF2.

The protein localises to the cytoplasm. Functionally, peptide chain release factor 2 directs the termination of translation in response to the peptide chain termination codons UGA and UAA. The chain is Peptide chain release factor 2 from Mycobacterium ulcerans (strain Agy99).